Consider the following 300-residue polypeptide: Sodium/potassium/calcium exchanger 1 (300 aa).

The tract at residues 1 to 251 (DPGSQGVGAE…ENEQPLSLEW (251 aa)) is disordered. Acidic residues-rich tracts occupy residues 92–102 (GEVEGDEDEGE), 109–119 (GEVEGDEDEGE), 126–136 (GEVEGDEDEGE), 158–175 (GEVE…DEGE), and 215–244 (GDSE…EENE). The chain crosses the membrane as a helical span at residues 259-275 (AIYLFLLPIVFPLWLTV).

This sequence belongs to the Ca(2+):cation antiporter (CaCA) (TC 2.A.19) family. SLC24A subfamily. Post-translationally, the uncleaved signal sequence is required for efficient membrane targeting and proper membrane integration and topology.

The protein localises to the cell membrane. The catalysed reaction is Ca(2+)(out) + K(+)(out) + 4 Na(+)(in) = Ca(2+)(in) + K(+)(in) + 4 Na(+)(out). Calcium, potassium:sodium antiporter that transports 1 Ca(2+) and 1 K(+) in exchange for 4 Na(+). Critical component of the visual transduction cascade, controlling the calcium concentration of outer segments during light and darkness. Light causes a rapid lowering of cytosolic free calcium in the outer segment of both retinal rod and cone photoreceptors and the light-induced lowering of calcium is caused by extrusion via this protein which plays a key role in the process of light adaptation. This chain is Sodium/potassium/calcium exchanger 1 (SLC24A1), found in Bison bison (American bison).